We begin with the raw amino-acid sequence, 37 residues long: Large ribosomal subunit protein bL12 (37 aa).

The protein belongs to the bacterial ribosomal protein bL12 family. Homodimer. Part of the ribosomal stalk of the 50S ribosomal subunit. Forms a multimeric L10(L12)X complex, where L10 forms an elongated spine to which 2 to 4 L12 dimers bind in a sequential fashion. Binds GTP-bound translation factors.

Forms part of the ribosomal stalk which helps the ribosome interact with GTP-bound translation factors. Is thus essential for accurate translation. The chain is Large ribosomal subunit protein bL12 (rplL) from Clostridium pasteurianum.